Reading from the N-terminus, the 575-residue chain is DNA mismatch repair protein MutL (575 aa).

This sequence belongs to the DNA mismatch repair MutL/HexB family.

This protein is involved in the repair of mismatches in DNA. It is required for dam-dependent methyl-directed DNA mismatch repair. May act as a 'molecular matchmaker', a protein that promotes the formation of a stable complex between two or more DNA-binding proteins in an ATP-dependent manner without itself being part of a final effector complex. In Dictyoglomus thermophilum (strain ATCC 35947 / DSM 3960 / H-6-12), this protein is DNA mismatch repair protein MutL.